Here is a 224-residue protein sequence, read N- to C-terminus: Cytidylate kinase (224 aa).

11–19 (GPAGAGKST) is a binding site for ATP.

The protein belongs to the cytidylate kinase family. Type 1 subfamily.

The protein resides in the cytoplasm. The catalysed reaction is CMP + ATP = CDP + ADP. It catalyses the reaction dCMP + ATP = dCDP + ADP. The protein is Cytidylate kinase of Exiguobacterium sp. (strain ATCC BAA-1283 / AT1b).